We begin with the raw amino-acid sequence, 284 residues long: Bifunctional protein FolD (284 aa).

Residues 166–168 and isoleucine 232 contribute to the NADP(+) site; that span reads GAS.

It belongs to the tetrahydrofolate dehydrogenase/cyclohydrolase family. In terms of assembly, homodimer.

It carries out the reaction (6R)-5,10-methylene-5,6,7,8-tetrahydrofolate + NADP(+) = (6R)-5,10-methenyltetrahydrofolate + NADPH. The enzyme catalyses (6R)-5,10-methenyltetrahydrofolate + H2O = (6R)-10-formyltetrahydrofolate + H(+). It participates in one-carbon metabolism; tetrahydrofolate interconversion. In terms of biological role, catalyzes the oxidation of 5,10-methylenetetrahydrofolate to 5,10-methenyltetrahydrofolate and then the hydrolysis of 5,10-methenyltetrahydrofolate to 10-formyltetrahydrofolate. The polypeptide is Bifunctional protein FolD (Pseudomonas paraeruginosa (strain DSM 24068 / PA7) (Pseudomonas aeruginosa (strain PA7))).